A 333-amino-acid polypeptide reads, in one-letter code: Sodium/bile acid cotransporter 7 (333 aa).

Residues 1-10 (MGLLERLRKE) lie on the Cytoplasmic side of the membrane. Residues 11 to 31 (WFIAGIALVIAAARLEPAVGV) form a helical membrane-spanning segment. Over 32–37 (KGGPLK) the chain is Extracellular. A helical transmembrane segment spans residues 38–58 (PEITITYIAVSAIFFNSGLSL). The Cytoplasmic portion of the chain corresponds to 59–71 (KTEELTSALMHVK). The chain crosses the membrane as a helical span at residues 72 to 92 (LHLFVQIFTLVFFPTAIWLFL). At 93-103 (QLLSITPINEW) the chain is on the extracellular side. The helical transmembrane segment at 104 to 124 (LLKGLQTVGCMPPPVSSAVIL) threads the bilayer. At 125 to 126 (TK) the chain is on the cytoplasmic side. The chain crosses the membrane as a helical span at residues 127 to 147 (AVGGNEAAAIFNSAFGSFLLG). The Extracellular portion of the chain corresponds to 148 to 151 (SSSS). The helical transmembrane segment at 152–172 (VPFTSIFSQLFMTVVVPLIIG) threads the bilayer. At 173–189 (QIVRRYIKDWLERRKPP) the chain is on the cytoplasmic side. A helical transmembrane segment spans residues 190–210 (FGTISSCVLLMIIYTTFCDTF). Topologically, residues 211-222 (ANPNIDLDKFSL) are extracellular. A helical transmembrane segment spans residues 223–243 (IIIVFIIFSVQMSFMFLTFLF). Residues 244–258 (STRSNSGFTPADTVA) are Cytoplasmic-facing. A helical membrane pass occupies residues 259–279 (IIFCSTHKSLTLGIPMLKIVF). The Extracellular portion of the chain corresponds to 280–286 (AGYEHLS). Residues 287 to 307 (LISVPLLIYHPAQILLGSLLV) traverse the membrane as a helical segment. The Cytoplasmic segment spans residues 308 to 333 (PTIKSWMVSRQKALKLTRQPKVPVKV).

This sequence belongs to the bile acid:sodium symporter (BASS) (TC 2.A.28) family.

It is found in the cell membrane. It localises to the endoplasmic reticulum membrane. The protein localises to the golgi apparatus membrane. Its function is as follows. Involved in teeth and skeletal development. Has an essential role in the biosynthesis and trafficking of glycosaminoglycans and glycoproteins to produce a proper functioning extracellular matrix. Required for extracellular matrix mineralization. Also involved in the regulation of cellular calcium homeostasis. Does not show transport activity towards bile acids or steroid sulfates. This Gallus gallus (Chicken) protein is Sodium/bile acid cotransporter 7 (SLC10A7).